The chain runs to 405 residues: MTTLGTPYSPHATKVMLLGSGELGKEVLIALQRLGVETIAVDRYENAPGQQVAHHARTITMSDPAQLKALIEAEKPDLVVPEIEAIATPMLEELEAAGVVTVIPTARAARLTMDREGIRRLAAETLGLATSPYRFCDSQQELQAAIDGTDGQPAIGFPCVVKPVMSSSGKGQSKLDGPDDVAKAWDYAMAGGRVSHGRVIVEGFIDFDYEITQLTVRAKGADGQVQTHFCDPIGHIQQSGDYVESWQPHPMHPAALQKSRDIAKAVTDDLGGLGLFGVELFVKGEQVWFSEVSPRPHDTGLVTLATQWQSEFELHARAILGLPVDASLRNPGASAVIYGGQDAEGLVFDGVDEALAVPGTDLRLFGKPESFVKRRMGVALARAQDVEQARTNAKLAAGKVKPRKP.

Residues 22-23 and Glu-82 each bind N(1)-(5-phospho-beta-D-ribosyl)glycinamide; that span reads EL. ATP contacts are provided by residues Arg-115, Lys-162, 167–172, 202–205, and Glu-210; these read SSGKGQ and EGFI. The 201-residue stretch at 120–320 folds into the ATP-grasp domain; the sequence is RLAAETLGLA…EFELHARAIL (201 aa). Mg(2+)-binding residues include Glu-279 and Glu-291. Residues Asp-298, Lys-367, and 374-375 each bind N(1)-(5-phospho-beta-D-ribosyl)glycinamide; that span reads RR.

It belongs to the PurK/PurT family. As to quaternary structure, homodimer.

The enzyme catalyses N(1)-(5-phospho-beta-D-ribosyl)glycinamide + formate + ATP = N(2)-formyl-N(1)-(5-phospho-beta-D-ribosyl)glycinamide + ADP + phosphate + H(+). It participates in purine metabolism; IMP biosynthesis via de novo pathway; N(2)-formyl-N(1)-(5-phospho-D-ribosyl)glycinamide from N(1)-(5-phospho-D-ribosyl)glycinamide (formate route): step 1/1. Involved in the de novo purine biosynthesis. Catalyzes the transfer of formate to 5-phospho-ribosyl-glycinamide (GAR), producing 5-phospho-ribosyl-N-formylglycinamide (FGAR). Formate is provided by PurU via hydrolysis of 10-formyl-tetrahydrofolate. The sequence is that of Formate-dependent phosphoribosylglycinamide formyltransferase from Delftia acidovorans (strain DSM 14801 / SPH-1).